The primary structure comprises 261 residues: Epidermal growth factor-binding protein type B (261 aa).

Residues 1–16 form the signal peptide; that stretch reads MWFLILFLALSLGGID. Residues 17–24 constitute a propeptide, activation peptide; it reads AAPPLQSR. Positions 25–258 constitute a Peptidase S1 domain; sequence VVGGFNCKKN…FNSWIKDTMM (234 aa). Intrachain disulfides connect C31–C173, C50–C66, C152–C219, C184–C198, and C209–C234. The active-site Charge relay system is the H65. The N-linked (GlcNAc...) asparagine glycan is linked to N102. D120 serves as the catalytic Charge relay system. S213 acts as the Charge relay system in catalysis.

It belongs to the peptidase S1 family. Kallikrein subfamily.

It carries out the reaction Hydrolyzes mouse Ren2 protein (a species of prorenin present in the submandibular gland) on the carboxy side of the arginine residue at the Lys-Arg-|- pair in the N-terminus, to yield mature renin.. Cleaves REN2 at a dibasic site to yield mature renin. The polypeptide is Epidermal growth factor-binding protein type B (Egfbp2) (Mus musculus (Mouse)).